We begin with the raw amino-acid sequence, 508 residues long: Bifunctional purine biosynthesis protein PurH (508 aa).

The 144-residue stretch at 1-144 (MTRALLSVSD…KNFAGVLPIV (144 aa)) folds into the MGS-like domain.

The protein belongs to the PurH family.

The catalysed reaction is (6R)-10-formyltetrahydrofolate + 5-amino-1-(5-phospho-beta-D-ribosyl)imidazole-4-carboxamide = 5-formamido-1-(5-phospho-D-ribosyl)imidazole-4-carboxamide + (6S)-5,6,7,8-tetrahydrofolate. It carries out the reaction IMP + H2O = 5-formamido-1-(5-phospho-D-ribosyl)imidazole-4-carboxamide. Its pathway is purine metabolism; IMP biosynthesis via de novo pathway; 5-formamido-1-(5-phospho-D-ribosyl)imidazole-4-carboxamide from 5-amino-1-(5-phospho-D-ribosyl)imidazole-4-carboxamide (10-formyl THF route): step 1/1. It participates in purine metabolism; IMP biosynthesis via de novo pathway; IMP from 5-formamido-1-(5-phospho-D-ribosyl)imidazole-4-carboxamide: step 1/1. The protein is Bifunctional purine biosynthesis protein PurH of Leuconostoc citreum (strain KM20).